We begin with the raw amino-acid sequence, 307 residues long: Serine/threonine-protein phosphatase PP2A-2 catalytic subunit (307 aa).

Mn(2+)-binding residues include aspartate 55, histidine 57, aspartate 83, and asparagine 115. Catalysis depends on histidine 116, which acts as the Proton donor. Mn(2+) contacts are provided by histidine 165 and histidine 239.

It belongs to the PPP phosphatase family. PP-2A subfamily. Requires Mn(2+) as cofactor.

The protein localises to the cytoplasm. It catalyses the reaction O-phospho-L-seryl-[protein] + H2O = L-seryl-[protein] + phosphate. It carries out the reaction O-phospho-L-threonyl-[protein] + H2O = L-threonyl-[protein] + phosphate. The polypeptide is Serine/threonine-protein phosphatase PP2A-2 catalytic subunit (PP2A2) (Oryza sativa subsp. indica (Rice)).